The sequence spans 397 residues: Serpin B10 (397 aa).

A Nuclear localization signal motif is present at residues Lys74–Lys77.

The protein belongs to the serpin family. Ov-serpin subfamily.

Its subcellular location is the nucleus. It is found in the cytoplasm. Protease inhibitor that may play a role in the regulation of protease activities during hematopoiesis and apoptosis induced by TNF. May regulate protease activities in the cytoplasm and in the nucleus. In Bos taurus (Bovine), this protein is Serpin B10 (SERPINB10).